The chain runs to 308 residues: Ribosomal RNA small subunit methyltransferase H (308 aa).

Residues 33–35 (GGY), D51, F82, D96, and Q103 contribute to the S-adenosyl-L-methionine site.

This sequence belongs to the methyltransferase superfamily. RsmH family.

The protein localises to the cytoplasm. The enzyme catalyses cytidine(1402) in 16S rRNA + S-adenosyl-L-methionine = N(4)-methylcytidine(1402) in 16S rRNA + S-adenosyl-L-homocysteine + H(+). In terms of biological role, specifically methylates the N4 position of cytidine in position 1402 (C1402) of 16S rRNA. The polypeptide is Ribosomal RNA small subunit methyltransferase H (Rickettsia canadensis (strain McKiel)).